Reading from the N-terminus, the 95-residue chain is Co-chaperonin GroES (95 aa).

The protein belongs to the GroES chaperonin family. Heptamer of 7 subunits arranged in a ring. Interacts with the chaperonin GroEL.

It localises to the cytoplasm. Together with the chaperonin GroEL, plays an essential role in assisting protein folding. The GroEL-GroES system forms a nano-cage that allows encapsulation of the non-native substrate proteins and provides a physical environment optimized to promote and accelerate protein folding. GroES binds to the apical surface of the GroEL ring, thereby capping the opening of the GroEL channel. The polypeptide is Co-chaperonin GroES (Staphylococcus haemolyticus (strain JCSC1435)).